A 276-amino-acid chain; its full sequence is Light-independent protochlorophyllide reductase iron-sulfur ATP-binding protein (276 aa).

Residues 12-17 (GIGKST) and lysine 41 contribute to the ATP site. Serine 16 is a binding site for Mg(2+). Positions 97 and 131 each coordinate [4Fe-4S] cluster. 182 to 183 (NR) is an ATP binding site.

The protein belongs to the NifH/BchL/ChlL family. Homodimer. Protochlorophyllide reductase is composed of three subunits; BchL, BchN and BchB. [4Fe-4S] cluster serves as cofactor.

It catalyses the reaction chlorophyllide a + oxidized 2[4Fe-4S]-[ferredoxin] + 2 ADP + 2 phosphate = protochlorophyllide a + reduced 2[4Fe-4S]-[ferredoxin] + 2 ATP + 2 H2O. It participates in porphyrin-containing compound metabolism; bacteriochlorophyll biosynthesis (light-independent). Its function is as follows. Component of the dark-operative protochlorophyllide reductase (DPOR) that uses Mg-ATP and reduced ferredoxin to reduce ring D of protochlorophyllide (Pchlide) to form chlorophyllide a (Chlide). This reaction is light-independent. The L component serves as a unique electron donor to the NB-component of the complex, and binds Mg-ATP. The protein is Light-independent protochlorophyllide reductase iron-sulfur ATP-binding protein of Chlorobium chlorochromatii (strain CaD3).